The following is a 603-amino-acid chain: Alpha-1,2-mannosyltransferase algn-9 (603 aa).

The segment at 1 to 25 (MVTHRRKGGSGPPQKPPPRIVDRSS) is disordered. Over 1-108 (MVTHRRKGGS…EYSPVYAIRS (108 aa)) the chain is Lumenal. The helical transmembrane segment at 109–129 (YFYIYLHYIPASLFANLFGDT) threads the bilayer. Residue lysine 130 is a topological domain, cytoplasmic. A helical membrane pass occupies residues 131 to 151 (IVVFTLIRLTIGLFCLLGEYY). Over 152–166 (AFDAICKKINIATGR) the chain is Lumenal. A helical transmembrane segment spans residues 167–187 (FFILFSIFSSGMFLASTAFVP). Over 188-195 (SSFCMAIT) the chain is Cytoplasmic. The helical transmembrane segment at 196-216 (FYILGAYLNENWTAGIFCVAF) threads the bilayer. Topologically, residues 217-218 (ST) are lumenal. A helical transmembrane segment spans residues 219–239 (MVGWPFSAVLGLPIVADMLLL). Residues 240–245 (KGLRIR) are Cytoplasmic-facing. The helical transmembrane segment at 246 to 266 (FILTSLVIGLCIGGVQVITDS) threads the bilayer. The Lumenal segment spans residues 267–310 (HYFGKTVLAPLNIFLYNVVSGPGPSLYGEEPLSFYIKNLFNNWN). Residues 311-331 (IVIFAAPFGFPLSLAYFTKVW) traverse the membrane as a helical segment. Over 332–343 (MSQDRNVALYQR) the chain is Cytoplasmic. Residues 344–364 (FAPIILLAVTTAAWLLIFGSQ) traverse the membrane as a helical segment. Residues 365–370 (AHKEER) are Lumenal-facing. Residues 371 to 391 (FLFPIYPFIAFFAALALDATN) form a helical membrane-spanning segment. Residues 392–397 (RLCLKK) are Cytoplasmic-facing. Residues 398–418 (LGMDNILSILFILCFAILSAS) traverse the membrane as a helical segment. Topologically, residues 419-603 (RTYSIHNNYG…TCTLYRKSNL (185 aa)) are lumenal. N-linked (GlcNAc...) asparagine glycosylation is present at asparagine 443.

It belongs to the glycosyltransferase 22 family.

It is found in the endoplasmic reticulum membrane. The enzyme catalyses an alpha-D-Man-(1-&gt;2)-alpha-D-Man-(1-&gt;2)-alpha-D-Man-(1-&gt;3)-[alpha-D-Man-(1-&gt;3)-alpha-D-Man-(1-&gt;6)]-beta-D-Man-(1-&gt;4)-beta-D-GlcNAc-(1-&gt;4)-alpha-D-GlcNAc-diphospho-di-trans,poly-cis-dolichol + a di-trans,poly-cis-dolichyl beta-D-mannosyl phosphate = an alpha-D-Man-(1-&gt;2)-alpha-D-Man-(1-&gt;2)-alpha-D-Man-(1-&gt;3)-[alpha-D-Man-(1-&gt;2)-alpha-D-Man-(1-&gt;3)-alpha-D-Man-(1-&gt;6)]-beta-D-Man-(1-&gt;4)-beta-D-GlcNAc-(1-&gt;4)-alpha-D-GlcNAc-diphospho-di-trans,poly-cis-dolichol + a di-trans,poly-cis-dolichyl phosphate + H(+). The catalysed reaction is an alpha-D-Man-(1-&gt;2)-alpha-D-Man-(1-&gt;2)-alpha-D-Man-(1-&gt;3)-[alpha-D-Man-(1-&gt;2)-alpha-D-Man-(1-&gt;3)-[alpha-D-Man-(1-&gt;6)]-alpha-D-Man-(1-&gt;6)]-beta-D-Man-(1-&gt;4)-beta-D-GlcNAc-(1-&gt;4)-alpha-D-GlcNAc-diphospho-di-trans,poly-cis-dolichol + a di-trans,poly-cis-dolichyl beta-D-mannosyl phosphate = an alpha-D-Man-(1-&gt;2)-alpha-D-Man-(1-&gt;2)-alpha-D-Man-(1-&gt;3)-[alpha-D-Man-(1-&gt;2)-alpha-D-Man-(1-&gt;3)-[alpha-D-Man-(1-&gt;2)-alpha-D-Man-(1-&gt;6)]-alpha-D-Man-(1-&gt;6)]-beta-D-Man-(1-&gt;4)-beta-D-GlcNAc-(1-&gt;4)-alpha-D-GlcNAc-diphospho-di-trans,poly-cis-dolichol + a di-trans,poly-cis-dolichyl phosphate + H(+). It participates in protein modification; protein glycosylation. Functionally, catalyzes the transfer of mannose from Dol-P-Man to lipid-linked oligosaccharides. The polypeptide is Alpha-1,2-mannosyltransferase algn-9 (Caenorhabditis elegans).